The primary structure comprises 252 residues: 5'-nucleotidase SurE (252 aa).

A divalent metal cation contacts are provided by Asp-8, Asp-9, Ser-39, and Asn-95.

This sequence belongs to the SurE nucleotidase family. It depends on a divalent metal cation as a cofactor.

It localises to the cytoplasm. It catalyses the reaction a ribonucleoside 5'-phosphate + H2O = a ribonucleoside + phosphate. Its function is as follows. Nucleotidase that shows phosphatase activity on nucleoside 5'-monophosphates. This Clostridium botulinum (strain Kyoto / Type A2) protein is 5'-nucleotidase SurE.